Consider the following 236-residue polypeptide: tRNA (guanine-N(7)-)-methyltransferase (236 aa).

Residues glycine 54, 77–78, 110–111, and leucine 130 contribute to the S-adenosyl-L-methionine site; these read EI and NA. Residue aspartate 133 is part of the active site. An S-adenosyl-L-methionine-binding site is contributed by 208–210; sequence TEE.

The protein belongs to the class I-like SAM-binding methyltransferase superfamily. TrmB family.

It localises to the nucleus. The enzyme catalyses guanosine(46) in tRNA + S-adenosyl-L-methionine = N(7)-methylguanosine(46) in tRNA + S-adenosyl-L-homocysteine. Its pathway is tRNA modification; N(7)-methylguanine-tRNA biosynthesis. Its function is as follows. Catalyzes the formation of N(7)-methylguanine at position 46 (m7G46) in tRNA. This is tRNA (guanine-N(7)-)-methyltransferase from Bombyx mori (Silk moth).